The chain runs to 76 residues: Vasotab-TY3 (76 aa).

An N-terminal signal peptide occupies residues 1–21 (MKFALFSVLVLMLIATFVAAD). One can recognise a Kazal-like domain in the interval 22 to 76 (DCPRICTSDYTPVCGTPSGGRRSANRTFANQCGLDSHNCLNKGDTYDKLHDGECK). 3 disulfides stabilise this stretch: Cys-23/Cys-60, Cys-27/Cys-53, and Cys-35/Cys-75.

Expressed by the salivary gland.

The protein resides in the secreted. Vasodilator protein that inhibits vasoconstriction of isolated rat femoral artery induced by phenylephrine. Since platelet aggregation and vasoconstriction are key hemostatic responses, particularly in small wounds, this protein likely participates in the antihemostatic responses during blood feeding. Blocks L-type calcium channels (Cav1/CACNA1) in left ventricular myocytes isolated from rat hearts. This is Vasotab-TY3 from Tabanus yao (Horsefly).